A 310-amino-acid polypeptide reads, in one-letter code: 4-hydroxyproline 2-epimerase (310 aa).

Cys88 functions as the Proton acceptor in the catalytic mechanism. Residues 89-90 (GH), His208, and Asp232 contribute to the substrate site. Residue Cys236 is the Proton donor of the active site. Residue 237-238 (GT) coordinates substrate.

The protein belongs to the proline racemase family.

It carries out the reaction trans-4-hydroxy-L-proline = cis-4-hydroxy-D-proline. Catalyzes the epimerization of trans-4-hydroxy-L-proline (t4LHyp) to cis-4-hydroxy-D-proline (c4DHyp). Is likely involved in a degradation pathway that converts t4LHyp to alpha-ketoglutarate. Displays no proline racemase activity. In Pseudomonas fluorescens (strain ATCC BAA-477 / NRRL B-23932 / Pf-5), this protein is 4-hydroxyproline 2-epimerase.